A 1101-amino-acid polypeptide reads, in one-letter code: Serine/threonine-protein kinase PSK2 (1101 aa).

At threonine 118 the chain carries Phosphothreonine. The 259-residue stretch at 841 to 1099 (FTILQVMGEG…IDEIYEDKWL (259 aa)) folds into the Protein kinase domain. Residues 847–855 (MGEGAYGKV) and lysine 870 contribute to the ATP site. The Proton acceptor role is filled by aspartate 975.

Belongs to the protein kinase superfamily. Ser/Thr protein kinase family.

Its subcellular location is the cytoplasm. It catalyses the reaction L-seryl-[protein] + ATP = O-phospho-L-seryl-[protein] + ADP + H(+). It carries out the reaction L-threonyl-[protein] + ATP = O-phospho-L-threonyl-[protein] + ADP + H(+). Its function is as follows. Serine/threonine-protein kinase involved in the control of sugar metabolism and translation. Phosphorylates UGP1, which is required for normal glycogen and beta-(1,6)-glucan synthesis. This phosphorylation shifts glucose partitioning toward cell wall glucan synthesis at the expense of glycogen synthesis. Also phosphorylates the glycogen synthase GSY2 and the translation factors CAF20, TIF11 and SRO9. This chain is Serine/threonine-protein kinase PSK2 (PSK2), found in Saccharomyces cerevisiae (strain ATCC 204508 / S288c) (Baker's yeast).